The primary structure comprises 158 residues: Glutathione peroxidase homolog BsaA (158 aa).

Residue cysteine 36 is part of the active site.

The protein belongs to the glutathione peroxidase family.

The sequence is that of Glutathione peroxidase homolog BsaA (bsaA) from Staphylococcus epidermidis (strain ATCC 12228 / FDA PCI 1200).